The primary structure comprises 224 residues: Giant hemoglobin linker AV-1 chain (224 aa).

The region spanning 62-103 (HWCPSKYHRCGNSPQCMSNMAFCDGVNDCKNHFDEDENRCVV) is the LDL-receptor class A domain. 3 disulfide bridges follow: cysteine 64–cysteine 77, cysteine 71–cysteine 90, and cysteine 84–cysteine 101. N-linked (GlcNAc...) asparagine glycosylation is present at asparagine 108.

As to quaternary structure, giant hemoglobin is composed of four heme-containing chains (AI to AIV), and two linker chains (AV and AVI).

Functionally, acts as a linker for the assembly of heme-containing chains in the construction of giant hemoglobin. The chain is Giant hemoglobin linker AV-1 chain from Lamellibrachia sp. (Deep-sea giant tube worm).